A 199-amino-acid chain; its full sequence is Urease accessory protein UreG (199 aa).

A GTP-binding site is contributed by 8–15 (GPVGSGKT).

This sequence belongs to the SIMIBI class G3E GTPase family. UreG subfamily. Homodimer. UreH, UreF and UreG form a complex that acts as a GTP-hydrolysis-dependent molecular chaperone, activating the urease apoprotein by helping to assemble the nickel containing metallocenter of UreC. The UreE protein probably delivers the nickel.

Its subcellular location is the cytoplasm. Functionally, facilitates the functional incorporation of the urease nickel metallocenter. This process requires GTP hydrolysis, probably effectuated by UreG. In Helicobacter acinonychis (strain Sheeba), this protein is Urease accessory protein UreG.